We begin with the raw amino-acid sequence, 256 residues long: Ribonuclease HII (256 aa).

Positions 72–256 (ALICGIDEVG…TFEPIKSLVN (185 aa)) constitute an RNase H type-2 domain. Aspartate 78, glutamate 79, and aspartate 170 together coordinate a divalent metal cation.

The protein belongs to the RNase HII family. The cofactor is Mn(2+). It depends on Mg(2+) as a cofactor.

The protein localises to the cytoplasm. It carries out the reaction Endonucleolytic cleavage to 5'-phosphomonoester.. Its function is as follows. Endonuclease that specifically degrades the RNA of RNA-DNA hybrids. This chain is Ribonuclease HII, found in Staphylococcus saprophyticus subsp. saprophyticus (strain ATCC 15305 / DSM 20229 / NCIMB 8711 / NCTC 7292 / S-41).